We begin with the raw amino-acid sequence, 658 residues long: Threonine--tRNA ligase (658 aa).

The region spanning 1 to 61 (MSDVRVIIQR…KDGETVEAVE (61 aa)) is the TGS domain. The tract at residues 259-554 (DHRKLGSELD…LLEHYAGAMP (296 aa)) is catalytic. Residues Cys-353, His-404, and His-531 each contribute to the Zn(2+) site.

It belongs to the class-II aminoacyl-tRNA synthetase family. Homodimer. Requires Zn(2+) as cofactor.

It localises to the cytoplasm. It carries out the reaction tRNA(Thr) + L-threonine + ATP = L-threonyl-tRNA(Thr) + AMP + diphosphate + H(+). Catalyzes the attachment of threonine to tRNA(Thr) in a two-step reaction: L-threonine is first activated by ATP to form Thr-AMP and then transferred to the acceptor end of tRNA(Thr). Also edits incorrectly charged L-seryl-tRNA(Thr). The protein is Threonine--tRNA ligase of Streptomyces coelicolor (strain ATCC BAA-471 / A3(2) / M145).